A 260-amino-acid chain; its full sequence is Adenosylcobinamide-GDP ribazoletransferase (260 aa).

The next 7 membrane-spanning stretches (helical) occupy residues 31 to 51 (FYFLPLIGGLIAGLVLIPIYF), 57 to 77 (IEISGFISLLLYLFLTGSIHL), 108 to 128 (YGTIGLNVFLLLRYINYSTII), 131 to 151 (AGLLILAGIISRLSGLAVVVF), 173 to 193 (FFFWLVLVCFLSLFTPEIAAF), 206 to 226 (LKYLLLPLTAFILTFIIIRIS), and 240 to 260 (LIVELTELAVLSTSFFINVHL).

This sequence belongs to the CobS family. Requires Mg(2+) as cofactor.

The protein resides in the cell inner membrane. The enzyme catalyses alpha-ribazole + adenosylcob(III)inamide-GDP = adenosylcob(III)alamin + GMP + H(+). It catalyses the reaction alpha-ribazole 5'-phosphate + adenosylcob(III)inamide-GDP = adenosylcob(III)alamin 5'-phosphate + GMP + H(+). Its pathway is cofactor biosynthesis; adenosylcobalamin biosynthesis; adenosylcobalamin from cob(II)yrinate a,c-diamide: step 7/7. Its function is as follows. Joins adenosylcobinamide-GDP and alpha-ribazole to generate adenosylcobalamin (Ado-cobalamin). Also synthesizes adenosylcobalamin 5'-phosphate from adenosylcobinamide-GDP and alpha-ribazole 5'-phosphate. The chain is Adenosylcobinamide-GDP ribazoletransferase from Treponema denticola (strain ATCC 35405 / DSM 14222 / CIP 103919 / JCM 8153 / KCTC 15104).